The sequence spans 312 residues: Pyridoxal kinase (312 aa).

The residue at position 1 (Met1) is an N-acetylmethionine. 2 residues coordinate pyridoxal 5'-phosphate: Ser12 and Thr47. Pyridoxamine is bound by residues Ser12 and Thr47. Ser59 is subject to Phosphoserine. Asp113 contacts K(+). A pyridoxal 5'-phosphate-binding site is contributed by Tyr127. Thr148 is a K(+) binding site. Asn150 is an ADP binding site. Residue Asn150 coordinates ATP. Ser164 carries the phosphoserine modification. Thr186 serves as a coordination point for K(+). 186-187 (TS) contributes to the ADP binding site. Residue 186–187 (TS) coordinates ATP. Ser213 carries the phosphoserine modification. ADP-binding positions include 223–226 (MHKV) and 233–234 (TG). ATP is bound by residues 223 to 226 (MHKV) and 233 to 234 (TG). Position 232–235 (232–235 (GTGD)) interacts with pyridoxal 5'-phosphate. Position 235 (Asp235) interacts with pyridoxamine. The active-site Proton acceptor is the Asp235. The residue at position 285 (Ser285) is a Phosphoserine.

The protein belongs to the pyridoxine kinase family. Homodimer. Requires Zn(2+) as cofactor. Mg(2+) serves as cofactor. Ubiquitous.

It is found in the cytoplasm. The protein localises to the cytosol. It catalyses the reaction pyridoxal + ATP = pyridoxal 5'-phosphate + ADP + H(+). It carries out the reaction pyridoxamine + ATP = pyridoxamine 5'-phosphate + ADP + H(+). The enzyme catalyses pyridoxine + ATP = pyridoxine 5'-phosphate + ADP + H(+). It participates in cofactor metabolism; pyridoxal 5'-phosphate salvage; pyridoxal 5'-phosphate from pyridoxal: step 1/1. Its pathway is cofactor metabolism; pyridoxal 5'-phosphate salvage; pyridoxine 5'-phosphate from pyridoxine: step 1/1. It functions in the pathway cofactor metabolism; pyridoxal 5'-phosphate salvage; pyridoxamine 5'-phosphate from pyridoxamine: step 1/1. With respect to regulation, activated by K(+). Activity is increased in the presence of Na(+). Catalyzes the phosphorylation of the dietary vitamin B6 vitamers pyridoxal (PL), pyridoxine (PN) and pyridoxamine (PM) to form pyridoxal 5'-phosphate (PLP), pyridoxine 5'-phosphate (PNP) and pyridoxamine 5'-phosphate (PMP), respectively. PLP is the active form of vitamin B6, and acts as a cofactor for over 140 different enzymatic reactions. This chain is Pyridoxal kinase (PDXK), found in Ovis aries (Sheep).